We begin with the raw amino-acid sequence, 381 residues long: E3 ubiquitin-protein ligase RNF13 (381 aa).

The first 34 residues, 1–34 (MLLSIGMLMLSATQIYTIVTVQLFAFLNLLPVEA), serve as a signal peptide directing secretion. Topologically, residues 35–182 (DILAYNFENG…IPEFSLPLEY (148 aa)) are lumenal. The region spanning 64 to 160 (LKGFLINSKP…GEASANSLKE (97 aa)) is the PA domain. The N-linked (GlcNAc...) asparagine glycan is linked to asparagine 88. The helical transmembrane segment at 183–203 (YLIPFLIIVGICLILIVIFMI) threads the bilayer. Residues 204–381 (TKFVQDRHRA…ERDYRVTNTV (178 aa)) lie on the Cytoplasmic side of the membrane. The RING-type; atypical zinc finger occupies 240-282 (CAICLDEYEDGDKLRILPCSHAYHCKCVDPWLTKTKKTCPVCK). Residues 285–381 (VVPSQGDSDS…ERDYRVTNTV (97 aa)) are disordered. Composition is skewed to acidic residues over residues 292–305 (SDSE…ENEV) and 339–353 (SEYE…DSSD). Residues 370-381 (NDERDYRVTNTV) are compositionally biased toward basic and acidic residues.

As to expression, widely expressed (at protein level). Lowest levels in the liver, moderate levels in the heart, intestine and spleen, and high levels in skeletal muscle, kidney, proventriculus and brain. Also expressed in inner ear after noise exposure.

It is found in the endoplasmic reticulum membrane. The protein resides in the late endosome membrane. Its subcellular location is the lysosome membrane. The protein localises to the nucleus inner membrane. The catalysed reaction is S-ubiquitinyl-[E2 ubiquitin-conjugating enzyme]-L-cysteine + [acceptor protein]-L-lysine = [E2 ubiquitin-conjugating enzyme]-L-cysteine + N(6)-ubiquitinyl-[acceptor protein]-L-lysine.. It participates in protein modification; protein ubiquitination. In terms of biological role, E3 ubiquitin-protein ligase that regulates cell proliferation. Involved in apoptosis regulation. Mediates ER stress-induced activation of JNK signaling pathway and apoptosis by promoting ERN1 activation and splicing of XBP1 mRNA. This Gallus gallus (Chicken) protein is E3 ubiquitin-protein ligase RNF13.